We begin with the raw amino-acid sequence, 696 residues long: Caprolactamase subunit alpha (696 aa).

Belongs to the HyuA family. The caprolactamase is a heterotetramer composed of two alpha subunits (CapA) and two beta subunits (CapB).

Activity is dependent on the presence of ATP and bicarbonate. The requirement for bicarbonate may be related to allosteric activation through conformational effects, but it is also conceivable that carboxyphosphate is formed and acts as a mediator in caprolactam activation, forming carboxy- or phospholactim. Its function is as follows. Component of a caprolactamase involved in the degradation of caprolactam, an industrial compound mainly used in the production of Nylon 6. Catalyzes the ATP-dependent hydrolysis of the caprolactam ring to form 6-aminocaproic acid (6-ACA). The alpha subunit is responsible for ATP-dependent substrate phosphorylation. The enzyme cannot use 5-oxoproline. This is Caprolactamase subunit alpha from Pseudomonas jessenii.